Here is a 436-residue protein sequence, read N- to C-terminus: Histidinol dehydrogenase (436 aa).

Residues Tyr-136, Gln-198, and Asn-221 each coordinate NAD(+). Substrate-binding residues include Ser-244, Gln-266, and His-269. Residues Gln-266 and His-269 each coordinate Zn(2+). Residues Glu-334 and His-335 each act as proton acceptor in the active site. Residues His-335, Asp-368, Glu-422, and His-427 each coordinate substrate. A Zn(2+)-binding site is contributed by Asp-368. Position 427 (His-427) interacts with Zn(2+).

The protein belongs to the histidinol dehydrogenase family. Requires Zn(2+) as cofactor.

It catalyses the reaction L-histidinol + 2 NAD(+) + H2O = L-histidine + 2 NADH + 3 H(+). It functions in the pathway amino-acid biosynthesis; L-histidine biosynthesis; L-histidine from 5-phospho-alpha-D-ribose 1-diphosphate: step 9/9. In terms of biological role, catalyzes the sequential NAD-dependent oxidations of L-histidinol to L-histidinaldehyde and then to L-histidine. In Dehalococcoides mccartyi (strain CBDB1), this protein is Histidinol dehydrogenase.